Consider the following 258-residue polypeptide: Hydroxyethylthiazole kinase (258 aa).

Methionine 37 contacts substrate. Positions 112 and 158 each coordinate ATP. Alanine 185 serves as a coordination point for substrate.

This sequence belongs to the Thz kinase family. Requires Mg(2+) as cofactor.

The catalysed reaction is 5-(2-hydroxyethyl)-4-methylthiazole + ATP = 4-methyl-5-(2-phosphooxyethyl)-thiazole + ADP + H(+). It participates in cofactor biosynthesis; thiamine diphosphate biosynthesis; 4-methyl-5-(2-phosphoethyl)-thiazole from 5-(2-hydroxyethyl)-4-methylthiazole: step 1/1. In terms of biological role, catalyzes the phosphorylation of the hydroxyl group of 4-methyl-5-beta-hydroxyethylthiazole (THZ). This chain is Hydroxyethylthiazole kinase, found in Rhizobium etli (strain ATCC 51251 / DSM 11541 / JCM 21823 / NBRC 15573 / CFN 42).